Consider the following 154-residue polypeptide: Ascorbate-specific PTS system EIIA component (154 aa).

One can recognise a PTS EIIA type-2 domain in the interval 6-150 (SLAENKSIRL…QEVLDLIDRT (145 aa)). The active-site Tele-phosphohistidine intermediate is His68. Phosphohistidine is present on His68.

The protein localises to the cytoplasm. Functionally, the phosphoenolpyruvate-dependent sugar phosphotransferase system (sugar PTS), a major carbohydrate active transport system, catalyzes the phosphorylation of incoming sugar substrates concomitantly with their translocation across the cell membrane. The enzyme II UlaABC PTS system is involved in ascorbate transport. In Shigella flexneri, this protein is Ascorbate-specific PTS system EIIA component (ulaC).